A 104-amino-acid polypeptide reads, in one-letter code: L-rhamnose mutarotase (104 aa).

Residue Y18 participates in substrate binding. H22 functions as the Proton donor in the catalytic mechanism. Substrate is bound by residues Y41 and 76–77; that span reads WW.

The protein belongs to the rhamnose mutarotase family. Homodimer.

The protein localises to the cytoplasm. The enzyme catalyses alpha-L-rhamnose = beta-L-rhamnose. It functions in the pathway carbohydrate metabolism; L-rhamnose metabolism. Its function is as follows. Involved in the anomeric conversion of L-rhamnose. This Burkholderia cenocepacia (strain HI2424) protein is L-rhamnose mutarotase.